A 276-amino-acid chain; its full sequence is 4-deoxy-L-threo-5-hexosulose-uronate ketol-isomerase 2 (276 aa).

The Zn(2+) site is built by His-194, His-196, Glu-201, and His-243.

This sequence belongs to the KduI family. Zn(2+) is required as a cofactor.

The catalysed reaction is 5-dehydro-4-deoxy-D-glucuronate = 3-deoxy-D-glycero-2,5-hexodiulosonate. Its pathway is glycan metabolism; pectin degradation; 2-dehydro-3-deoxy-D-gluconate from pectin: step 4/5. Its function is as follows. Catalyzes the isomerization of 5-dehydro-4-deoxy-D-glucuronate to 3-deoxy-D-glycero-2,5-hexodiulosonate. This is 4-deoxy-L-threo-5-hexosulose-uronate ketol-isomerase 2 (kduI2) from Enterococcus faecalis (strain ATCC 700802 / V583).